Here is a 614-residue protein sequence, read N- to C-terminus: Vitamin B12 transporter BtuB (614 aa).

An N-terminal signal peptide occupies residues 1–20; the sequence is MIKKASLLTACSVTAFSAWA. Residues 26-33 carry the TonB box motif; the sequence is DTLVVTAN. The TBDR plug domain occupies 38 to 152; it reads PRSTVLAPTT…IGGVVNIITT (115 aa). Residues L83, S85, N92, and 110–111 each bind cyanocob(III)alamin; that span reads VS. In terms of domain architecture, TBDR beta-barrel spans 155–614; that stretch reads HPGTEISAGW…EYTLSGSYTF (460 aa). Transmembrane regions (beta stranded) follow at residues 158–165, 169–178, and 184–195; these read TEISAGWG, YQNYDVSTQQ, and TRVTLLGDYAHT. 4 residues coordinate Ca(2+): D199, Q211, D213, and D215. Transmembrane regions (beta stranded) follow at residues 217 to 227 and 232 to 248; these read FLSKTLYGALE and DVWS…NRTN. Residues Y249 and D250 each contribute to the Ca(2+) site. Cyanocob(III)alamin is bound at residue A251. Position 261 (D261) interacts with Ca(2+). The next 14 membrane-spanning stretches (beta stranded) occupy residues 263-277, 279-296, 309-325, 328-337, 353-369, 371-381, 385-400, 403-417, 434-443, 449-458, 473-490, 494-509, 517-529, and 535-550; these read RKLY…LRYN, ELIK…KDYN, TLDE…NNII, HGNIGAGVDW, YDQR…QQVG, FTFEGAGRSDD, FGRH…WEFI, YRFI…KAPN, KSKQWEGAFE, VNWRISGYRN, YYNE…TANF, PLTH…ARNA, RRAK…QLDW, and DWGI…YDKD. T309 provides a ligand contact to cyanocob(III)alamin. R517 provides a ligand contact to cyanocob(III)alamin. A cyanocob(III)alamin-binding site is contributed by Y551. 3 beta stranded membrane passes run 558–572, 585–596, and 602–614; these read TVKM…LAVA, IANLFDKDYETV, and AGRE…SYTF. A TonB C-terminal box motif is present at residues 597–614; that stretch reads YGYQTAGREYTLSGSYTF.

This sequence belongs to the TonB-dependent receptor family. BtuB (TC 1.B.14.3.1) subfamily.

The protein localises to the cell outer membrane. Its function is as follows. Involved in the active translocation of vitamin B12 (cyanocobalamin) across the outer membrane to the periplasmic space. It derives its energy for transport by interacting with the trans-periplasmic membrane protein TonB. This is Vitamin B12 transporter BtuB from Escherichia coli O1:K1 / APEC.